The sequence spans 64 residues: Conotoxin Vc1.3 (64 aa).

Positions 1–21 (MGMRMMFTVFLLVVLATTVVS) are cleaved as a signal peptide. A propeptide spanning residues 22–43 (FTSDRASDGRKAAASDLITLTI) is cleaved from the precursor. 2 disulfides stabilise this stretch: C46/C52 and C47/C60. Position 60 is a cysteine amide (C60).

Belongs to the conotoxin A superfamily. In terms of tissue distribution, expressed by the venom duct.

The protein resides in the secreted. Its function is as follows. May act as a toxin. The protein is Conotoxin Vc1.3 of Conus victoriae (Queen Victoria cone).